The primary structure comprises 249 residues: Large ribosomal subunit protein uL1 (249 aa).

The protein belongs to the universal ribosomal protein uL1 family. In terms of assembly, part of the 50S ribosomal subunit.

In terms of biological role, binds directly to 23S rRNA. The L1 stalk is quite mobile in the ribosome, and is involved in E site tRNA release. Functionally, protein L1 is also a translational repressor protein, it controls the translation of the L11 operon by binding to its mRNA. This is Large ribosomal subunit protein uL1 from Orientia tsutsugamushi (strain Ikeda) (Rickettsia tsutsugamushi).